A 212-amino-acid polypeptide reads, in one-letter code: Peptide methionine sulfoxide reductase MsrA (212 aa).

The span at M1 to D14 shows a compositional bias: polar residues. Positions M1–T21 are disordered. C52 is an active-site residue.

It belongs to the MsrA Met sulfoxide reductase family.

The catalysed reaction is L-methionyl-[protein] + [thioredoxin]-disulfide + H2O = L-methionyl-(S)-S-oxide-[protein] + [thioredoxin]-dithiol. It catalyses the reaction [thioredoxin]-disulfide + L-methionine + H2O = L-methionine (S)-S-oxide + [thioredoxin]-dithiol. Its function is as follows. Has an important function as a repair enzyme for proteins that have been inactivated by oxidation. Catalyzes the reversible oxidation-reduction of methionine sulfoxide in proteins to methionine. The sequence is that of Peptide methionine sulfoxide reductase MsrA from Pectobacterium carotovorum subsp. carotovorum (strain PC1).